A 281-amino-acid polypeptide reads, in one-letter code: Endochitinase B (281 aa).

Positions 1-33 are cleaved as a signal peptide; that stretch reads MAMAKAGAPRVSAAQLVTLGLSLLCAVAGPAAA. The region spanning 34–68 is the Chitin-binding type-1 domain; it reads QNCGCQPNVCCSKFGYCGTTDEYCGDGCQSGPCRS. Cystine bridges form between Cys-36–Cys-44, Cys-38–Cys-50, Cys-43–Cys-57, and Cys-61–Cys-66. Residues 69-78 are hinge region (Gly-rich); that stretch reads GGGGSSGGGG. The tract at residues 79–281 is catalytic; sequence ANVASVVTGS…GVDPGPNLTC (203 aa). A disulfide bridge links Cys-101 with Cys-150. The active-site Proton donor is Glu-145. The N-linked (GlcNAc...) asparagine glycan is linked to Asn-156. 2 disulfide bridges follow: Cys-162–Cys-171 and Cys-249–Cys-281. N-linked (GlcNAc...) asparagine glycosylation is present at Asn-278.

The protein belongs to the glycosyl hydrolase 19 family. Chitinase class I subfamily.

It localises to the secreted. It carries out the reaction Random endo-hydrolysis of N-acetyl-beta-D-glucosaminide (1-&gt;4)-beta-linkages in chitin and chitodextrins.. Functionally, defense against chitin-containing fungal pathogens. Its action is countered by fungal polyglycine hydrolases, that cleaves within its hinge region (Gly-rich) to disrupt chitin-binding. In Zea mays (Maize), this protein is Endochitinase B.